Consider the following 57-residue polypeptide: Potassium channel toxin MeuTXKalpha2 (57 aa).

The signal sequence occupies residues 1–19 (MSRLYAIILIALVFNVIMT). A propeptide spanning residues 20–28 (IMPDMKVEA) is cleaved from the precursor. Disulfide bonds link Cys31–Cys47, Cys34–Cys52, and Cys38–Cys54.

Belongs to the short scorpion toxin superfamily. Potassium channel inhibitor family. Alpha-KTx 08 subfamily. As to expression, expressed by the venom gland.

The protein localises to the secreted. Its function is as follows. Inhibits Kv1.1/KCNA1, Kv1.3/KCNA3 and Shaker potassium channels. This Mesobuthus eupeus (Lesser Asian scorpion) protein is Potassium channel toxin MeuTXKalpha2.